A 513-amino-acid chain; its full sequence is Zinc finger CCCH-type with G patch domain-containing protein (513 aa).

A C3H1-type zinc finger spans residues proline 155–leucine 178. The segment covering aspartate 252 to serine 261 has biased composition (acidic residues). A disordered region spans residues aspartate 252–leucine 283. Residues glutamate 262–asparagine 271 are compositionally biased toward low complexity. Acidic residues predominate over residues serine 272–leucine 283. The 47-residue stretch at threonine 312–glutamate 358 folds into the G-patch domain. Residues valine 478–arginine 495 show a composition bias toward polar residues. A disordered region spans residues valine 478–phenylalanine 513. Basic and acidic residues predominate over residues serine 496–phenylalanine 513.

The protein localises to the nucleus. Its function is as follows. Transcription repressor. The sequence is that of Zinc finger CCCH-type with G patch domain-containing protein from Drosophila melanogaster (Fruit fly).